The primary structure comprises 38 residues: Potassium channel toxin alpha-KTx 2.10 (38 aa).

Intrachain disulfides connect Cys7–Cys29, Cys13–Cys34, and Cys17–Cys36.

Expressed by the venom gland.

The protein resides in the secreted. Functionally, blocks human voltage-gated potassium (Kv) channel Kv1.2/KCNA2. Does not inhibit human Kv1.1/KCNA1 at 100nM concentration. The protein is Potassium channel toxin alpha-KTx 2.10 of Centruroides bonito (Scorpion).